Reading from the N-terminus, the 180-residue chain is MPKPTKGPRLGGSSSHQKAILANLATSLFEHGRITTTEPKARALRPYAEKLITHAKKGALHNRREVLKKLRDKDVVHTLFAEIGPFFADRDGGYTRIIKIEARKGDNAPMAVIELVREKTVTSEANRARRVAAAQAKAKKAAAMPTEESEAKPAEEGDVVGASEPDAKAPEEPPTEAPEN.

The disordered stretch occupies residues 134–180; it reads AQAKAKKAAAMPTEESEAKPAEEGDVVGASEPDAKAPEEPPTEAPEN.

The protein belongs to the bacterial ribosomal protein bL17 family. In terms of assembly, part of the 50S ribosomal subunit. Contacts protein L32.

This is Large ribosomal subunit protein bL17 from Mycobacterium tuberculosis (strain CDC 1551 / Oshkosh).